The primary structure comprises 279 residues: Energy-coupling factor transporter ATP-binding protein EcfA1 (279 aa).

Residues Ile5–Asp240 form the ABC transporter domain. Gly40–Ser47 serves as a coordination point for ATP.

Belongs to the ABC transporter superfamily. Energy-coupling factor EcfA family. Forms a stable energy-coupling factor (ECF) transporter complex composed of 2 membrane-embedded substrate-binding proteins (S component), 2 ATP-binding proteins (A component) and 2 transmembrane proteins (T component).

The protein resides in the cell membrane. ATP-binding (A) component of a common energy-coupling factor (ECF) ABC-transporter complex. Unlike classic ABC transporters this ECF transporter provides the energy necessary to transport a number of different substrates. In Enterococcus faecalis (strain ATCC 700802 / V583), this protein is Energy-coupling factor transporter ATP-binding protein EcfA1.